The following is a 426-amino-acid chain: Enolase (426 aa).

Gln163 serves as a coordination point for (2R)-2-phosphoglycerate. Glu205 serves as the catalytic Proton donor. Residues Asp242, Glu283, and Asp310 each contribute to the Mg(2+) site. Residues Lys335, Arg364, Ser365, and Lys386 each coordinate (2R)-2-phosphoglycerate. Lys335 functions as the Proton acceptor in the catalytic mechanism.

This sequence belongs to the enolase family. Requires Mg(2+) as cofactor.

Its subcellular location is the cytoplasm. The protein resides in the secreted. The protein localises to the cell surface. It carries out the reaction (2R)-2-phosphoglycerate = phosphoenolpyruvate + H2O. The protein operates within carbohydrate degradation; glycolysis; pyruvate from D-glyceraldehyde 3-phosphate: step 4/5. In terms of biological role, catalyzes the reversible conversion of 2-phosphoglycerate (2-PG) into phosphoenolpyruvate (PEP). It is essential for the degradation of carbohydrates via glycolysis. The sequence is that of Enolase from Arthrobacter sp. (strain FB24).